Reading from the N-terminus, the 157-residue chain is 3-hydroxyacyl-[acyl-carrier-protein] dehydratase FabZ (157 aa).

Histidine 58 is an active-site residue.

Belongs to the thioester dehydratase family. FabZ subfamily.

It is found in the cytoplasm. It catalyses the reaction a (3R)-hydroxyacyl-[ACP] = a (2E)-enoyl-[ACP] + H2O. In terms of biological role, involved in unsaturated fatty acids biosynthesis. Catalyzes the dehydration of short chain beta-hydroxyacyl-ACPs and long chain saturated and unsaturated beta-hydroxyacyl-ACPs. The protein is 3-hydroxyacyl-[acyl-carrier-protein] dehydratase FabZ of Brucella melitensis biotype 2 (strain ATCC 23457).